Reading from the N-terminus, the 328-residue chain is V-type sodium ATPase subunit C (328 aa).

Belongs to the V-ATPase V0D/AC39 subunit family.

Its function is as follows. Involved in ATP-driven sodium extrusion. This chain is V-type sodium ATPase subunit C (ntpC), found in Enterococcus hirae (strain ATCC 9790 / DSM 20160 / JCM 8729 / LMG 6399 / NBRC 3181 / NCIMB 6459 / NCDO 1258 / NCTC 12367 / WDCM 00089 / R).